The following is a 146-amino-acid chain: MLGWVITCHDDRAQEILDALEKKHGALLQCRAVNFWRGLSSNMLSRMMCDALHEADSGEGVIFLTDIAGAPPYRVASLLSHKHSRCEVISGVTLPLIEQMMACRETMTSSEFRERIVELGAPEVSSLWHQQQKNPPFVLKHNLYEY.

The region spanning 1–124 (MLGWVITCHD…RIVELGAPEV (124 aa)) is the PTS EIIA type-4 domain. H9 acts as the Tele-phosphohistidine intermediate in catalysis.

It localises to the cytoplasm. Its function is as follows. The phosphoenolpyruvate-dependent sugar phosphotransferase system (sugar PTS), a major carbohydrate active -transport system, catalyzes the phosphorylation of incoming sugar substrates concomitantly with their translocation across the cell membrane. The sequence is that of Putative phosphotransferase enzyme IIA component YadI (yadI) from Escherichia coli (strain K12).